We begin with the raw amino-acid sequence, 209 residues long: Orotate phosphoribosyltransferase (209 aa).

5-phospho-alpha-D-ribose 1-diphosphate is bound by residues Arg96, Lys100, His102, and 122 to 130 (EDLISTGGS). Ser126 contributes to the orotate binding site.

Belongs to the purine/pyrimidine phosphoribosyltransferase family. PyrE subfamily. Homodimer. It depends on Mg(2+) as a cofactor.

It catalyses the reaction orotidine 5'-phosphate + diphosphate = orotate + 5-phospho-alpha-D-ribose 1-diphosphate. It functions in the pathway pyrimidine metabolism; UMP biosynthesis via de novo pathway; UMP from orotate: step 1/2. In terms of biological role, catalyzes the transfer of a ribosyl phosphate group from 5-phosphoribose 1-diphosphate to orotate, leading to the formation of orotidine monophosphate (OMP). This Streptococcus pyogenes serotype M2 (strain MGAS10270) protein is Orotate phosphoribosyltransferase.